Here is a 501-residue protein sequence, read N- to C-terminus: Solute carrier family 2, facilitated glucose transporter member 5 (501 aa).

M1 is modified (N-acetylmethionine). The Cytoplasmic segment spans residues 1–17 (MEEKHQEETGELTLVLA). Residues 18 to 38 (LATLIAAFGSSFQYGYNVAAV) form a helical membrane-spanning segment. Y31 provides a ligand contact to D-fructose. At 39-67 (NSPSEFMQQFYNDTYYDRNEENIESFTLT) the chain is on the extracellular side. N50 carries N-linked (GlcNAc...) asparagine glycosylation. The chain crosses the membrane as a helical span at residues 68-90 (LLWSLTVSMFPFGGFIGSLMVGT). Over 91-97 (LVNKLGR) the chain is Cytoplasmic. The helical transmembrane segment at 98–118 (KGALLFNNIFSILPAILMGCS) threads the bilayer. The Extracellular segment spans residues 119–125 (QIAQSFE). A helical membrane pass occupies residues 126–148 (LIIISRLLVGICAGISSNVVPMY). Over 149–160 (LGELAPKNLRGA) the chain is Cytoplasmic. The chain crosses the membrane as a helical span at residues 161-181 (LGVVPQLFITVGILVAQLFGL). Q166 contacts D-fructose. Over 182-191 (RSLLANEDGW) the chain is Extracellular. The chain crosses the membrane as a helical span at residues 192–212 (PVLLGLTGVPAGLQLLLLPFF). Residues 213 to 276 (PESPRYLLIQ…LFTMQSLRWQ (64 aa)) are Cytoplasmic-facing. Residues 277 to 297 (LISMIVLMAGQQLSGVNAIYY) form a helical membrane-spanning segment. Residues Q287 and 295–297 (IYY) contribute to the D-fructose site. Over 298–312 (YADQIYLSAGVKSDD) the chain is Extracellular. Residues 313–333 (VQYVTAGTGAVNVFMTILTIF) form a helical membrane-spanning segment. At 334–341 (VVELWGRR) the chain is on the cytoplasmic side. The chain crosses the membrane as a helical span at residues 342 to 362 (FLLLVGFSTCLIACLVLTAAL). Residues 363–370 (ALQNTISW) lie on the Extracellular side of the membrane. Residues 371–393 (MPYISIVCVIVYVIGHALGPSPI) traverse the membrane as a helical segment. H386 is a D-fructose binding site. The Cytoplasmic segment spans residues 394 to 411 (PALLITEIFLQSSRPAAY). The chain crosses the membrane as a helical span at residues 412–432 (MIGGSVHWLSNFTVGLIFPFI). 418–419 (HW) contacts D-fructose. Topologically, residues 433–438 (QMGLGP) are extracellular. Residues 439–459 (YSFIIFATICFLTTIYIFMVV) form a helical membrane-spanning segment. Residues 460–501 (PETKGRTFIEINQIFTMKNKVSDVYPKKEEELGALPHAILEQ) lie on the Cytoplasmic side of the membrane.

This sequence belongs to the major facilitator superfamily. Sugar transporter (TC 2.A.1.1) family. Glucose transporter subfamily. In terms of tissue distribution, detected at the apical membrane of villi in the jejunum. Detected in jejunum mucosa. Detected in epididymis and whole testis (at protein level). Detected in small intestine, kidney and testis. Detected in cochlea, but not in inner or outer cochlear hair cells.

The protein resides in the apical cell membrane. Its subcellular location is the cell membrane. It is found in the sarcolemma. The catalysed reaction is D-fructose(out) = D-fructose(in). With respect to regulation, fructose uptake is inhibited by cytochalasin B. Functionally, functions as a fructose transporter that has only low activity with other monosaccharides. Can mediate the uptake of deoxyglucose, but with low efficiency. Essential for fructose uptake in the small intestine. Plays a role in the regulation of salt uptake and blood pressure in response to dietary fructose. Required for the development of high blood pressure in response to high dietary fructose intake. This is Solute carrier family 2, facilitated glucose transporter member 5 from Mus musculus (Mouse).